A 259-amino-acid polypeptide reads, in one-letter code: Tubulin-specific chaperone C (259 aa).

The 130-residue stretch at proline 112–tryptophan 241 folds into the C-CAP/cofactor C-like domain.

The protein belongs to the TBCC family.

Its subcellular location is the cytoplasm. The protein localises to the cytoskeleton. Functionally, tubulin-folding protein; involved in the final step of the tubulin folding pathway. The protein is Tubulin-specific chaperone C (cin2) of Schizosaccharomyces pombe (strain 972 / ATCC 24843) (Fission yeast).